We begin with the raw amino-acid sequence, 509 residues long: 2,3-bisphosphoglycerate-independent phosphoglycerate mutase (509 aa).

Mn(2+) contacts are provided by Asp14 and Ser64. The Phosphoserine intermediate role is filled by Ser64. Residues His125, 155-156, Arg187, Arg193, 259-262, and Lys332 each bind substrate; these read RD and RADR. Residues Asp399, His403, Asp440, His441, and His459 each coordinate Mn(2+).

Belongs to the BPG-independent phosphoglycerate mutase family. As to quaternary structure, monomer. Requires Mn(2+) as cofactor.

It carries out the reaction (2R)-2-phosphoglycerate = (2R)-3-phosphoglycerate. It participates in carbohydrate degradation; glycolysis; pyruvate from D-glyceraldehyde 3-phosphate: step 3/5. Its function is as follows. Catalyzes the interconversion of 2-phosphoglycerate and 3-phosphoglycerate. This is 2,3-bisphosphoglycerate-independent phosphoglycerate mutase from Psychromonas ingrahamii (strain DSM 17664 / CCUG 51855 / 37).